Reading from the N-terminus, the 242-residue chain is N-glycosylase/DNA lyase (242 aa).

Gln-25, Ser-52, and Trp-63 together coordinate 8-oxoguanine. The helix-hairpin-helix stretch occupies residues Lys-119–Arg-183. Lys-143 functions as the Schiff-base intermediate with DNA in the catalytic mechanism. Phe-147 and Pro-173 together coordinate 8-oxoguanine. Asp-175 is an active-site residue. 8-oxoguanine contacts are provided by Asp-209 and Trp-213.

The protein belongs to the archaeal N-glycosylase/DNA lyase (AGOG) family.

The enzyme catalyses 2'-deoxyribonucleotide-(2'-deoxyribose 5'-phosphate)-2'-deoxyribonucleotide-DNA = a 3'-end 2'-deoxyribonucleotide-(2,3-dehydro-2,3-deoxyribose 5'-phosphate)-DNA + a 5'-end 5'-phospho-2'-deoxyribonucleoside-DNA + H(+). Functionally, DNA repair enzyme that is part of the base excision repair (BER) pathway; protects from oxidative damage by removing the major product of DNA oxidation, 8-oxoguanine (GO), from single- and double-stranded DNA substrates. This chain is N-glycosylase/DNA lyase, found in Methanopyrus kandleri (strain AV19 / DSM 6324 / JCM 9639 / NBRC 100938).